A 140-amino-acid chain; its full sequence is 3-hydroxyacyl-[acyl-carrier-protein] dehydratase FabZ (140 aa).

Residue His-47 is part of the active site.

It belongs to the thioester dehydratase family. FabZ subfamily.

The protein resides in the cytoplasm. The catalysed reaction is a (3R)-hydroxyacyl-[ACP] = a (2E)-enoyl-[ACP] + H2O. Involved in unsaturated fatty acids biosynthesis. Catalyzes the dehydration of short chain beta-hydroxyacyl-ACPs and long chain saturated and unsaturated beta-hydroxyacyl-ACPs. The protein is 3-hydroxyacyl-[acyl-carrier-protein] dehydratase FabZ of Streptococcus pyogenes serotype M49 (strain NZ131).